The following is a 287-amino-acid chain: Pirin-1 (287 aa).

Thr2 bears the N-acetylthreonine mark.

Belongs to the pirin family. Interacts with the G protein alpha-1 subunit GPA1. Interacts with NFYB6 and NFYB9.

It localises to the nucleus. Its function is as follows. Involved in abscisic acid signal transduction. Plays a role in seed germination and early seedling development. Involved in the blue light (BL) signaling. The sequence is that of Pirin-1 (PRN1) from Arabidopsis thaliana (Mouse-ear cress).